The chain runs to 297 residues: Nucleotide-binding protein DSY4845 (297 aa).

An ATP-binding site is contributed by glycine 13 to threonine 20. Aspartate 64–glycine 67 contacts GTP.

This sequence belongs to the RapZ-like family.

Functionally, displays ATPase and GTPase activities. The polypeptide is Nucleotide-binding protein DSY4845 (Desulfitobacterium hafniense (strain Y51)).